The following is a 170-amino-acid chain: Large ribosomal subunit protein uL5 (170 aa).

This sequence belongs to the universal ribosomal protein uL5 family. As to quaternary structure, component of the large ribosomal subunit.

Its subcellular location is the nucleus. The protein localises to the cytoplasm. Functionally, component of the ribosome, a large ribonucleoprotein complex responsible for the synthesis of proteins in the cell. The small ribosomal subunit (SSU) binds messenger RNAs (mRNAs) and translates the encoded message by selecting cognate aminoacyl-transfer RNA (tRNA) molecules. The large subunit (LSU) contains the ribosomal catalytic site termed the peptidyl transferase center (PTC), which catalyzes the formation of peptide bonds, thereby polymerizing the amino acids delivered by tRNAs into a polypeptide chain. The nascent polypeptides leave the ribosome through a tunnel in the LSU and interact with protein factors that function in enzymatic processing, targeting, and the membrane insertion of nascent chains at the exit of the ribosomal tunnel. This Chlamydomonas reinhardtii (Chlamydomonas smithii) protein is Large ribosomal subunit protein uL5 (RPL11).